The sequence spans 406 residues: Cysteine desulfurase (406 aa).

Lys-226 is subject to N6-(pyridoxal phosphate)lysine. The active-site Cysteine persulfide intermediate is Cys-364.

This sequence belongs to the class-V pyridoxal-phosphate-dependent aminotransferase family. Csd subfamily. Homodimer. Interacts with SufE and the SufBCD complex composed of SufB, SufC and SufD. The interaction with SufE is required to mediate the direct transfer of the sulfur atom from the S-sulfanylcysteine. Requires pyridoxal 5'-phosphate as cofactor.

It is found in the cytoplasm. The enzyme catalyses (sulfur carrier)-H + L-cysteine = (sulfur carrier)-SH + L-alanine. The catalysed reaction is L-selenocysteine + AH2 = hydrogenselenide + L-alanine + A + H(+). It participates in cofactor biosynthesis; iron-sulfur cluster biosynthesis. In terms of biological role, cysteine desulfurases mobilize the sulfur from L-cysteine to yield L-alanine, an essential step in sulfur metabolism for biosynthesis of a variety of sulfur-containing biomolecules. Component of the suf operon, which is activated and required under specific conditions such as oxidative stress and iron limitation. Acts as a potent selenocysteine lyase in vitro, that mobilizes selenium from L-selenocysteine. Selenocysteine lyase activity is however unsure in vivo. The polypeptide is Cysteine desulfurase (Escherichia coli O157:H7 (strain EC4115 / EHEC)).